Consider the following 109-residue polypeptide: uncharacterized protein (109 aa).

3 helical membrane passes run 7 to 27 (IITI…PFFV), 37 to 57 (YIRY…VVYC), and 63 to 83 (ILTG…LGLH).

This sequence belongs to the AzlD/HI_1737/HP1330 family.

It is found in the cell membrane. This is an uncharacterized protein from Haemophilus influenzae (strain ATCC 51907 / DSM 11121 / KW20 / Rd).